We begin with the raw amino-acid sequence, 65 residues long: Conotoxin tx3c (65 aa).

A signal peptide spans 1-19 (MFKLGVLLTICLLLFSLNA). Positions 20-50 (VPLDGDQPADQPAERLLDDISFENNPFYDPA) are excised as a propeptide. 3 disulfides stabilise this stretch: Cys53–Cys64, Cys54–Cys60, and Cys57–Cys63. A 4-hydroxyproline; partial modification is found at Pro62. At Cys64 the chain carries Cysteine amide.

The hydroxylation at Pro-62 is observed in PubMed:15924437, PubMed:19380747 and PubMed:22709442, and the non-hydroxylation is described in PubMed:22709442. Expressed by the venom duct.

It is found in the secreted. Functionally, causes scratching in mice. The sequence is that of Conotoxin tx3c from Conus textile (Cloth-of-gold cone).